The chain runs to 314 residues: Epithelial-stromal interaction protein 1 (314 aa).

Disordered stretches follow at residues 1-72 (MYPR…PNET), 200-219 (NRSA…WKLP), 225-267 (PSRA…HQEE), and 292-314 (SQPG…GWGI). Positions 43–58 (AEPKGPKLERQGHGDQ) are enriched in basic and acidic residues. Positions 71 to 180 (ETRRQKIQRI…QEDIRRATLR (110 aa)) form a coiled coil. A compositionally biased stretch (basic and acidic residues) spans 232–267 (AHKDSPQKEDNQKLQKTRDGHQKNKLLETKGQHQEE). A compositionally biased stretch (polar residues) spans 305–314 (NMNSTDGWGI).

Plays a role in M1 macrophage polarization and is required for the proper regulation of gene expression during M1 versus M2 macrophage differentiation. Might play a role in RELA/p65 and STAT1 phosphorylation and nuclear localization upon activation of macrophages. The chain is Epithelial-stromal interaction protein 1 (Epsti1) from Rattus norvegicus (Rat).